Consider the following 197-residue polypeptide: HTH-type transcriptional regulator BetI (197 aa).

Residues 8–68 (PIRRQQLIEA…ATMGYIMSML (61 aa)) form the HTH tetR-type domain. The segment at residues 31-50 (SIALIARLAGVSNGIISHYF) is a DNA-binding region (H-T-H motif).

Its pathway is amine and polyamine biosynthesis; betaine biosynthesis via choline pathway [regulation]. Functionally, repressor involved in the biosynthesis of the osmoprotectant glycine betaine. It represses transcription of the choline transporter BetT and the genes of BetAB involved in the synthesis of glycine betaine. In Pseudomonas fluorescens (strain ATCC BAA-477 / NRRL B-23932 / Pf-5), this protein is HTH-type transcriptional regulator BetI.